Consider the following 320-residue polypeptide: 1,5-anhydro-D-fructose reductase (320 aa).

Tyr40 functions as the Proton donor in the catalytic mechanism. Residue His102 coordinates substrate. Residues Gln194 and 265–277 (IPGS…IKEN) contribute to the NADP(+) site.

It belongs to the aldo/keto reductase family. As to quaternary structure, monomer.

It localises to the cytoplasm. The enzyme catalyses 1,5-anhydro-D-glucitol + NADP(+) = 1,5-anhydro-D-fructose + NADPH + H(+). Inhibited by p-chloromercuribenzoic acid and alkyliodines. Catalyzes the NADPH-dependent reduction of 1,5-anhydro-D-fructose (AF) to 1,5-anhydro-D-glucitol. The polypeptide is 1,5-anhydro-D-fructose reductase (AKR1E2) (Macaca fascicularis (Crab-eating macaque)).